The sequence spans 170 residues: Photosystem II extrinsic protein V (170 aa).

An N-terminal signal peptide occupies residues 1-33 (MVSVFSSLRQSFKGLLVLVPVLIGLAFISPAEA). Heme c is bound by residues cysteine 70, cysteine 73, histidine 74, and methionine 137.

The protein belongs to the cytochrome c family. PsbV subfamily. PSII is composed of 1 copy each of membrane proteins PsbA, PsbB, PsbC, PsbD, PsbE, PsbF, PsbH, PsbI, PsbJ, PsbK, PsbL, PsbM, PsbT, PsbX, PsbY, PsbZ, Psb30/Ycf12, peripheral proteins PsbO, CyanoQ (PsbQ), PsbU, PsbV and a large number of cofactors. It forms dimeric complexes. The cofactor is heme c.

It localises to the cellular thylakoid membrane. Functionally, one of the extrinsic, lumenal subunits of photosystem II (PSII). PSII is a light-driven water plastoquinone oxidoreductase, using light energy to abstract electrons from H(2)O, generating a proton gradient subsequently used for ATP formation. The extrinsic proteins stabilize the structure of photosystem II oxygen-evolving complex (OEC), the ion environment of oxygen evolution and protect the OEC against heat-induced inactivation. Low-potential cytochrome c that plays a role in the OEC of PSII. In Synechococcus sp. (strain CC9902), this protein is Photosystem II extrinsic protein V.